The chain runs to 218 residues: GCN5-related N-acetyltransferase 9 (218 aa).

Positions 36 to 183 (SALLEATGSE…KEVTLEYPVT (148 aa)) constitute an N-acetyltransferase domain. Residues 112-114 (MIA), 120-125 (GKGLGK), 152-154 (NTA), and F159 contribute to the acetyl-CoA site.

This sequence belongs to the acetyltransferase family. GNAT subfamily. In terms of assembly, oligomer. As to expression, expressed throughout the plant.

Its subcellular location is the cytoplasm. It is found in the nucleus. It carries out the reaction an N-terminal L-alpha-aminoacyl-[protein] + acetyl-CoA = N-terminal N(alpha)-acetyl-L-alpha-aminoacyl-[protein] + CoA + H(+). The enzyme catalyses L-lysyl-[protein] + acetyl-CoA = N(6)-acetyl-L-lysyl-[protein] + CoA + H(+). Functionally, probable protein acetyltransferase with dual specificity triggering both N-alpha-acetylation (NTA) and epsilon-lysine acetylation (KA). The polypeptide is GCN5-related N-acetyltransferase 9 (Arabidopsis thaliana (Mouse-ear cress)).